We begin with the raw amino-acid sequence, 212 residues long: Ribonuclease HII (212 aa).

The RNase H type-2 domain maps to 22-212 (ILIAGLDEAG…APLKGMIDGL (191 aa)). Aspartate 28, glutamate 29, and aspartate 123 together coordinate a divalent metal cation.

Belongs to the RNase HII family. Mn(2+) is required as a cofactor. It depends on Mg(2+) as a cofactor.

The protein resides in the cytoplasm. The enzyme catalyses Endonucleolytic cleavage to 5'-phosphomonoester.. Functionally, endonuclease that specifically degrades the RNA of RNA-DNA hybrids. This chain is Ribonuclease HII, found in Dehalococcoides mccartyi (strain ATCC BAA-2100 / JCM 16839 / KCTC 5957 / BAV1).